Here is a 436-residue protein sequence, read N- to C-terminus: RNA polymerase sigma-54 factor (436 aa).

A DNA-binding region (H-T-H motif) is located at residues 324–343; it reads TLREVADCLSLHESTVSRAI. An RPON box motif is present at residues 413 to 421; the sequence is SRRTVAKYR.

It belongs to the sigma-54 factor family. As to quaternary structure, interacts transiently with the RNAP core.

Sigma factors are initiation factors that promote the attachment of RNA polymerase (RNAP) to specific initiation sites and are then released. This sigma factor is responsible for the expression of the levanase operon. The open complex (sigma-54 and core RNA polymerase) serves as the receptor for receipt of the melting signal from the remotely bound activator protein LevR for the expression of the levanase operon. Associates with the RNAP core only in stationary phase cells. This Bacillus subtilis (strain 168) protein is RNA polymerase sigma-54 factor (sigL).